Consider the following 423-residue polypeptide: UDP-N-acetylglucosamine 1-carboxyvinyltransferase 2 (423 aa).

A phosphoenolpyruvate-binding site is contributed by 23–24; the sequence is KN. Position 93 (arginine 93) interacts with UDP-N-acetyl-alpha-D-glucosamine. Residue cysteine 117 is the Proton donor of the active site. Cysteine 117 is modified (2-(S-cysteinyl)pyruvic acid O-phosphothioketal). UDP-N-acetyl-alpha-D-glucosamine contacts are provided by residues 122–126, aspartate 305, and isoleucine 327; that span reads RPIDQ.

The protein belongs to the EPSP synthase family. MurA subfamily.

Its subcellular location is the cytoplasm. It carries out the reaction phosphoenolpyruvate + UDP-N-acetyl-alpha-D-glucosamine = UDP-N-acetyl-3-O-(1-carboxyvinyl)-alpha-D-glucosamine + phosphate. It participates in cell wall biogenesis; peptidoglycan biosynthesis. Its function is as follows. Cell wall formation. Adds enolpyruvyl to UDP-N-acetylglucosamine. In Listeria monocytogenes serovar 1/2a (strain ATCC BAA-679 / EGD-e), this protein is UDP-N-acetylglucosamine 1-carboxyvinyltransferase 2.